We begin with the raw amino-acid sequence, 222 residues long: Translation initiation factor 6 (222 aa).

It belongs to the eIF-6 family.

Functionally, binds to the 50S ribosomal subunit and prevents its association with the 30S ribosomal subunit to form the 70S initiation complex. The polypeptide is Translation initiation factor 6 (Methanothermobacter thermautotrophicus (strain ATCC 29096 / DSM 1053 / JCM 10044 / NBRC 100330 / Delta H) (Methanobacterium thermoautotrophicum)).